The primary structure comprises 262 residues: Nodulation protein J (262 aa).

The 227-residue stretch at 33–259 (ASILGNLADP…FLSTALLRRR (227 aa)) folds into the ABC transmembrane type-2 domain. The next 7 helical transmembrane spans lie at 35–55 (ILGNLADPLIYLFGLGAGLGM), 62–82 (GVSYIAFLSAGMVATSAMTAS), 102–122 (AILHTQVTIGDIVLGELAWAA), 127–147 (LAGTGIGVVAATLGYTEWVSL), 148–168 (LYALPVIALTGLAFASLAMIV), 177–197 (YFIFYQTLVITPMLFLSGAVF), and 231–251 (LVHVGLHIGALCCYAVVPFFL).

This sequence belongs to the ABC-2 integral membrane protein family. Lipooligosaccharide exporter (TC 3.A.1.102) subfamily. As to quaternary structure, the complex is composed of two ATP-binding proteins (NodI) and two transmembrane proteins (NodJ).

Its subcellular location is the cell inner membrane. Its function is as follows. Part of the ABC transporter complex NodIJ involved in the export of the nodulation factors (Nod factors), the bacterial signal molecules that induce symbiosis and subsequent nodulation induction. Nod factors are LCO (lipo-chitin oligosaccharide), a modified beta-1,4-linked N-acetylglucosamine oligosaccharide. This subunit encodes the transporter. In Rhizobium meliloti (strain 1021) (Ensifer meliloti), this protein is Nodulation protein J (nodJ).